A 200-amino-acid chain; its full sequence is MIESTLPALALWGVIGYLLGSIPFGMVLAKVMGLGNLRDIGSGNIGATNVLRTGNKLAAALTLVLDGGKGVVAVLAARAAGGEDLAQIAGLMAMIGHCYPVWLRFAGGKGVATFLGIVLALAFPVGVGCCLAWLAGAFATRISSMGALVASVAAVPLAFLLGFPGAVVLLILLGALIFWRHRGNIARIRTGTEPKIGQKK.

Transmembrane regions (helical) follow at residues 8–28 (ALAL…GMVL), 57–77 (LAAA…VLAA), 88–108 (IAGL…FAGG), 114–134 (FLGI…LAWL), and 159–179 (FLLG…LIFW).

Belongs to the PlsY family. In terms of assembly, probably interacts with PlsX.

The protein resides in the cell inner membrane. It carries out the reaction an acyl phosphate + sn-glycerol 3-phosphate = a 1-acyl-sn-glycero-3-phosphate + phosphate. Its pathway is lipid metabolism; phospholipid metabolism. Catalyzes the transfer of an acyl group from acyl-phosphate (acyl-PO(4)) to glycerol-3-phosphate (G3P) to form lysophosphatidic acid (LPA). This enzyme utilizes acyl-phosphate as fatty acyl donor, but not acyl-CoA or acyl-ACP. The polypeptide is Glycerol-3-phosphate acyltransferase (Roseobacter denitrificans (strain ATCC 33942 / OCh 114) (Erythrobacter sp. (strain OCh 114))).